We begin with the raw amino-acid sequence, 109 residues long: uncharacterized protein (109 aa).

Positions 1-25 (METKPNALTGTSLSSTSGQTTQKSI) are disordered. The segment covering 8 to 22 (LTGTSLSSTSGQTTQ) has biased composition (low complexity). Residues 42–62 (TFGLMAILNLALLLWTLLATL) form a helical membrane-spanning segment. The interval 84–109 (TTLQKNTPSAKNGLKNTTNKHSHEDM) is disordered. Positions 91-102 (PSAKNGLKNTTN) are enriched in polar residues.

The protein localises to the host membrane. This is an uncharacterized protein from Bdellovibrio phage phiMH2K (Bacteriophage phiMH2K).